The sequence spans 297 residues: Bifunctional protein FolD 2 (297 aa).

NADP(+) contacts are provided by residues 173-175, Ser198, and Ile239; that span reads GKS.

This sequence belongs to the tetrahydrofolate dehydrogenase/cyclohydrolase family. Homodimer.

It catalyses the reaction (6R)-5,10-methylene-5,6,7,8-tetrahydrofolate + NADP(+) = (6R)-5,10-methenyltetrahydrofolate + NADPH. The catalysed reaction is (6R)-5,10-methenyltetrahydrofolate + H2O = (6R)-10-formyltetrahydrofolate + H(+). The protein operates within one-carbon metabolism; tetrahydrofolate interconversion. Catalyzes the oxidation of 5,10-methylenetetrahydrofolate to 5,10-methenyltetrahydrofolate and then the hydrolysis of 5,10-methenyltetrahydrofolate to 10-formyltetrahydrofolate. The sequence is that of Bifunctional protein FolD 2 from Sinorhizobium medicae (strain WSM419) (Ensifer medicae).